A 297-amino-acid chain; its full sequence is Bax inhibitor 1 (297 aa).

Residues 1–53 (MSGPPPPYEEQSSHLYGQPASSQDGNAFIPEDFKYSTVVISCEPIIRQRFMHK) lie on the Lumenal side of the membrane. The chain crosses the membrane as a helical span at residues 54–74 (VYSLLSCQLLASLSFCYWASV). The Cytoplasmic segment spans residues 75–85 (STSLQNFIMSH). The helical transmembrane segment at 86 to 106 (IALFYICMVVSLVSCIWLAVS) threads the bilayer. Topologically, residues 107–146 (PRPEDYEASVPEPLLTGSSEEPAQEQRRLPWYVLSSYKQK) are lumenal. Residues 147–167 (LTLLSIFTLSEAYCLSLVTLA) traverse the membrane as a helical segment. At 168–171 (YDKD) the chain is on the cytoplasmic side. Residues 172-192 (TVLSALLITTIVVVGVSLTAL) form a helical membrane-spanning segment. Residues 193 to 208 (SERFENVLNSATSIYY) lie on the Lumenal side of the membrane. A helical transmembrane segment spans residues 209–229 (WLNWGLWIMIGMGLTALLFGW). Residues 230 to 239 (NTHSSKFNLL) lie on the Cytoplasmic side of the membrane. Residues 240-260 (YGWLGAILFTAYLFIDTQLIF) form a helical membrane-spanning segment. Over 261-270 (RKVYPDEEVR) the chain is Lumenal. A helical membrane pass occupies residues 271–291 (CAMMLYLDIVNLFLSILRILA). Topologically, residues 292-297 (NSNDDN) are cytoplasmic.

Belongs to the BI1 family. LFG subfamily.

It is found in the endoplasmic reticulum membrane. It localises to the vacuole membrane. The protein resides in the mitochondrion membrane. In terms of biological role, links the unfolded protein response and programmed cell death and mediates mitochondrial-dependent apoptosis. Induces cell death and disruption of the mitochondrial transmembrane potential via the mitochondrial phosphate carrier MIR1. Dispensible for starvation-induced autophagy. The sequence is that of Bax inhibitor 1 (BXI1) from Saccharomyces cerevisiae (strain ATCC 204508 / S288c) (Baker's yeast).